Here is a 422-residue protein sequence, read N- to C-terminus: MTDIVDELKWRGLVALSTDEDALRKAFADGPVTFYCGFDPTAPSLHLGNLVQILTMRRIQQAGNRPLGLVGGATGLIGDPKPNSERTLNSREVVAEWVERLRAQIAPLLDFEGPNAAIMVNNLDWTQGLSAIEFLRDVGKYFRVNKMIAKEAVSRRLNSDAGISYTEFSYQILQGMDFLELYRRYGCTLQTGGSDQWGNLTSGTDLIHRAEPDAVVHALGTPLITKADGTKFGKTESGTIWLDPEMTTPYAFYQFWLNADDRDVSKFLRIFSFKSHEEIEELEKQTEERPQARAAQRALAEELTTLVHGADQTAAVIAASKALFGQGELTELDEATLAAALSELPHVKVAEPAPVVDLFAEVALVASKSAARRTIKEGGAYVNNVKVAAEDAVPAKEDLLHGRWLVLRRGKKNLAAVEVTGG.

Tyr35 serves as a coordination point for L-tyrosine. A 'HIGH' region motif is present at residues 40–49 (PTAPSLHLGN). L-tyrosine is bound by residues Tyr170 and Gln174. Positions 231–235 (KFGKT) match the 'KMSKS' region motif. Lys234 is a binding site for ATP. Residues 353–419 (APVVDLFAEV…GKKNLAAVEV (67 aa)) form the S4 RNA-binding domain.

The protein belongs to the class-I aminoacyl-tRNA synthetase family. TyrS type 1 subfamily. As to quaternary structure, homodimer.

The protein localises to the cytoplasm. The enzyme catalyses tRNA(Tyr) + L-tyrosine + ATP = L-tyrosyl-tRNA(Tyr) + AMP + diphosphate + H(+). Catalyzes the attachment of tyrosine to tRNA(Tyr) in a two-step reaction: tyrosine is first activated by ATP to form Tyr-AMP and then transferred to the acceptor end of tRNA(Tyr). This is Tyrosine--tRNA ligase from Streptomyces avermitilis (strain ATCC 31267 / DSM 46492 / JCM 5070 / NBRC 14893 / NCIMB 12804 / NRRL 8165 / MA-4680).